The chain runs to 659 residues: DNA helicase/primase complex-associated protein (659 aa).

The protein belongs to the herpesviridae HEPA family. Associates with the primase and the helicase to form the helicase-primase complex. Interacts with the origin-binding protein. Interacts with the polymerase catalytic subunit.

It localises to the host nucleus. Its function is as follows. Component of the helicase/primase complex. Unwinds the DNA at the replication forks and generates single-stranded DNA for both leading and lagging strand synthesis. The primase synthesizes short RNA primers on the lagging strand that the polymerase presumably elongates using dNTPs. The primase-associated factor has no known catalytic activity in the complex and may serve to facilitate the formation of the replisome by directly interacting with the origin-binding protein and the polymerase. The polypeptide is DNA helicase/primase complex-associated protein (U74) (Human herpesvirus 7 (strain JI) (HHV-7)).